Reading from the N-terminus, the 512-residue chain is Histidine ammonia-lyase (512 aa).

Positions 142–144 form a cross-link, 5-imidazolinone (Ala-Gly); the sequence is ASG. Ser-143 is modified (2,3-didehydroalanine (Ser)).

The protein belongs to the PAL/histidase family. In terms of processing, contains an active site 4-methylidene-imidazol-5-one (MIO), which is formed autocatalytically by cyclization and dehydration of residues Ala-Ser-Gly.

The protein resides in the cytoplasm. The catalysed reaction is L-histidine = trans-urocanate + NH4(+). It participates in amino-acid degradation; L-histidine degradation into L-glutamate; N-formimidoyl-L-glutamate from L-histidine: step 1/3. This is Histidine ammonia-lyase from Bartonella quintana (strain Toulouse) (Rochalimaea quintana).